We begin with the raw amino-acid sequence, 1181 residues long: Katanin p80 WD40 repeat-containing subunit B1 homolog KTN80.2 (1181 aa).

WD repeat units follow at residues 13–53 (AHSA…SLMS), 56–95 (GHTS…MVRA), 98–137 (GHRS…CIQT), 140–181 (GHSR…HEFK), 183–221 (HEGP…LIGS), 224–264 (PEAT…DGVD), and 266–303 (GWST…IEPY). Residues 114–130 (FLASGSSDANLKIWDIR) carry the DWD box motif. Disordered stretches follow at residues 361-383 (AHKS…NKSL), 503-597 (KPPR…ESKS), 702-739 (TSMA…QTRT), 754-869 (KMKS…VIST), and 988-1008 (TKTQ…ISGR). 2 stretches are compositionally biased toward polar residues: residues 365-379 (GSLS…QAGD) and 509-526 (RSPS…STDS). 2 stretches are compositionally biased toward basic and acidic residues: residues 530-553 (DSKK…DDRG) and 569-585 (RSER…ELKS). Polar residues-rich tracts occupy residues 703–739 (SMAT…QTRT), 754–791 (KMKS…TRTS), 822–841 (SATN…QAKT), and 850–859 (ILNQRQTTNM). The span at 998–1008 (TQKEEPQISGR) shows a compositional bias: basic and acidic residues.

It belongs to the WD repeat KATNB1 family. In terms of assembly, component of KTN80-KTN1 complexes composed of a hexamer of KTN1-KTN80 heterodimers that sense microtubule (MT) geometry to confer precise MT severing. Interacts directly with AAA1/KTN1. Interacts with subunits of the CUL4-based E3 ligase complex DDB1A and DDB1B. Expressed at low levels in siliques, flowers, leaves, stems and roots.

The protein resides in the cytoplasm. It localises to the cytoskeleton. Its function is as follows. May participate in a complex which severs microtubules in an ATP-dependent manner. Microtubule severing may promote rapid reorganization of cellular microtubule arrays. Confers precision to microtubule (MT) severing by specific targeting of KTN1 to MT cleavage sites such as crossover or branching nucleation sites. Together with other KTN80s, regulates cell elongation by modulating MT organization. Negative regulator of abscisic acid (ABA) responses. May function as a substrate receptor for cullin-RING ubiquitin ligase 4 complexes (CRL4), a family of E3 ligases involved in protein degradation. This Arabidopsis thaliana (Mouse-ear cress) protein is Katanin p80 WD40 repeat-containing subunit B1 homolog KTN80.2.